The sequence spans 281 residues: tRNA pseudouridine synthase A (281 aa).

Residue Asp-55 is the Nucleophile of the active site. Position 110 (Tyr-110) interacts with substrate.

It belongs to the tRNA pseudouridine synthase TruA family.

The enzyme catalyses uridine(38/39/40) in tRNA = pseudouridine(38/39/40) in tRNA. Functionally, formation of pseudouridine at positions 38, 39 and 40 in the anticodon stem and loop of transfer RNAs. The protein is tRNA pseudouridine synthase A of Methanocorpusculum labreanum (strain ATCC 43576 / DSM 4855 / Z).